A 298-amino-acid chain; its full sequence is Lipoyl synthase (298 aa).

[4Fe-4S] cluster-binding residues include Cys-40, Cys-45, Cys-51, Cys-67, Cys-71, Cys-74, and Ser-280. One can recognise a Radical SAM core domain in the interval 53–269; that stretch reads AVRKTATFMI…KEIALSKGFS (217 aa).

This sequence belongs to the radical SAM superfamily. Lipoyl synthase family. The cofactor is [4Fe-4S] cluster.

It is found in the cytoplasm. The catalysed reaction is [[Fe-S] cluster scaffold protein carrying a second [4Fe-4S](2+) cluster] + N(6)-octanoyl-L-lysyl-[protein] + 2 oxidized [2Fe-2S]-[ferredoxin] + 2 S-adenosyl-L-methionine + 4 H(+) = [[Fe-S] cluster scaffold protein] + N(6)-[(R)-dihydrolipoyl]-L-lysyl-[protein] + 4 Fe(3+) + 2 hydrogen sulfide + 2 5'-deoxyadenosine + 2 L-methionine + 2 reduced [2Fe-2S]-[ferredoxin]. It functions in the pathway protein modification; protein lipoylation via endogenous pathway; protein N(6)-(lipoyl)lysine from octanoyl-[acyl-carrier-protein]. Catalyzes the radical-mediated insertion of two sulfur atoms into the C-6 and C-8 positions of the octanoyl moiety bound to the lipoyl domains of lipoate-dependent enzymes, thereby converting the octanoylated domains into lipoylated derivatives. The protein is Lipoyl synthase of Bacillus cereus (strain ATCC 10987 / NRS 248).